The sequence spans 41 residues: Large ribosomal subunit protein bL36 (41 aa).

Belongs to the bacterial ribosomal protein bL36 family.

The chain is Large ribosomal subunit protein bL36 from Bartonella quintana (strain Toulouse) (Rochalimaea quintana).